The primary structure comprises 149 residues: Deoxyuridine 5'-triphosphate nucleotidohydrolase (149 aa).

Substrate is bound by residues 68 to 70 (RSG), N81, 85 to 87 (LID), and M95.

It belongs to the dUTPase family. Mg(2+) serves as cofactor.

The enzyme catalyses dUTP + H2O = dUMP + diphosphate + H(+). It participates in pyrimidine metabolism; dUMP biosynthesis; dUMP from dCTP (dUTP route): step 2/2. This enzyme is involved in nucleotide metabolism: it produces dUMP, the immediate precursor of thymidine nucleotides and it decreases the intracellular concentration of dUTP so that uracil cannot be incorporated into DNA. This chain is Deoxyuridine 5'-triphosphate nucleotidohydrolase, found in Herminiimonas arsenicoxydans.